We begin with the raw amino-acid sequence, 498 residues long: Probable cytosol aminopeptidase (498 aa).

The Mn(2+) site is built by K269 and D274. K281 is a catalytic residue. Positions 292, 351, and 353 each coordinate Mn(2+). R355 is a catalytic residue.

The protein belongs to the peptidase M17 family. Requires Mn(2+) as cofactor.

It localises to the cytoplasm. It catalyses the reaction Release of an N-terminal amino acid, Xaa-|-Yaa-, in which Xaa is preferably Leu, but may be other amino acids including Pro although not Arg or Lys, and Yaa may be Pro. Amino acid amides and methyl esters are also readily hydrolyzed, but rates on arylamides are exceedingly low.. It carries out the reaction Release of an N-terminal amino acid, preferentially leucine, but not glutamic or aspartic acids.. Its function is as follows. Presumably involved in the processing and regular turnover of intracellular proteins. Catalyzes the removal of unsubstituted N-terminal amino acids from various peptides. This Glaesserella parasuis serovar 5 (strain SH0165) (Haemophilus parasuis) protein is Probable cytosol aminopeptidase.